We begin with the raw amino-acid sequence, 234 residues long: Carboxy-S-adenosyl-L-methionine synthase (234 aa).

S-adenosyl-L-methionine-binding positions include tyrosine 35, 60–62 (GCS), 109–110 (DV), asparagine 124, and arginine 191.

This sequence belongs to the class I-like SAM-binding methyltransferase superfamily. Cx-SAM synthase family. Homodimer.

The enzyme catalyses prephenate + S-adenosyl-L-methionine = carboxy-S-adenosyl-L-methionine + 3-phenylpyruvate + H2O. Its function is as follows. Catalyzes the conversion of S-adenosyl-L-methionine (SAM) to carboxy-S-adenosyl-L-methionine (Cx-SAM). In Campylobacter curvus (strain 525.92), this protein is Carboxy-S-adenosyl-L-methionine synthase.